We begin with the raw amino-acid sequence, 157 residues long: Succinate dehydrogenase assembly factor 2-A, mitochondrial (157 aa).

Residues 1–21 (MLRQVLSSTSVRRLLVSPTRC) constitute a mitochondrion transit peptide.

This sequence belongs to the SDHAF2 family. As to quaternary structure, interacts with the flavoprotein subunit within the SDH catalytic dimer.

Its subcellular location is the mitochondrion matrix. Plays an essential role in the assembly of succinate dehydrogenase (SDH), an enzyme complex (also referred to as respiratory complex II) that is a component of both the tricarboxylic acid (TCA) cycle and the mitochondrial electron transport chain, and which couples the oxidation of succinate to fumarate with the reduction of ubiquinone (coenzyme Q) to ubiquinol. Required for flavinylation (covalent attachment of FAD) of the flavoprotein subunit of the SDH catalytic dimer. The polypeptide is Succinate dehydrogenase assembly factor 2-A, mitochondrial (Drosophila mojavensis (Fruit fly)).